A 64-amino-acid chain; its full sequence is DNA gyrase inhibitor YacG (64 aa).

The Zn(2+) site is built by Cys9, Cys12, Cys28, and Cys32.

This sequence belongs to the DNA gyrase inhibitor YacG family. As to quaternary structure, interacts with GyrB. Requires Zn(2+) as cofactor.

In terms of biological role, inhibits all the catalytic activities of DNA gyrase by preventing its interaction with DNA. Acts by binding directly to the C-terminal domain of GyrB, which probably disrupts DNA binding by the gyrase. The protein is DNA gyrase inhibitor YacG of Enterobacter sp. (strain 638).